The sequence spans 174 residues: Methylated-DNA--protein-cysteine methyltransferase (174 aa).

Residue cysteine 141 is the Nucleophile; methyl group acceptor of the active site.

Belongs to the MGMT family.

It is found in the cytoplasm. The catalysed reaction is a 6-O-methyl-2'-deoxyguanosine in DNA + L-cysteinyl-[protein] = S-methyl-L-cysteinyl-[protein] + a 2'-deoxyguanosine in DNA. It catalyses the reaction a 4-O-methyl-thymidine in DNA + L-cysteinyl-[protein] = a thymidine in DNA + S-methyl-L-cysteinyl-[protein]. Involved in the cellular defense against the biological effects of O6-methylguanine (O6-MeG) and O4-methylthymine (O4-MeT) in DNA. Repairs the methylated nucleobase in DNA by stoichiometrically transferring the methyl group to a cysteine residue in the enzyme. This is a suicide reaction: the enzyme is irreversibly inactivated. The polypeptide is Methylated-DNA--protein-cysteine methyltransferase (Thermococcus gammatolerans (strain DSM 15229 / JCM 11827 / EJ3)).